The sequence spans 113 residues: Mediator of RNA polymerase II transcription subunit 11 (113 aa).

Belongs to the Mediator complex subunit 11 family. As to quaternary structure, component of the Mediator complex.

The protein resides in the nucleus. Functionally, component of the Mediator complex, a coactivator involved in the regulated transcription of nearly all RNA polymerase II-dependent genes. Mediator functions as a bridge to convey information from gene-specific regulatory proteins to the basal RNA polymerase II transcription machinery. Mediator is recruited to promoters by direct interactions with regulatory proteins and serves as a scaffold for the assembly of a functional pre-initiation complex with RNA polymerase II and the general transcription factors. The protein is Mediator of RNA polymerase II transcription subunit 11 (MED11) of Eremothecium gossypii (strain ATCC 10895 / CBS 109.51 / FGSC 9923 / NRRL Y-1056) (Yeast).